The following is an 89-amino-acid chain: MIDYIKSTVRNRNTIRLLEKNQYTFDVDPKATKTEVKRLIEGVFGVKVIGMNSKRLPIKQKRKGPTAGYAVRYKRMIVTLNSTDSIPVI.

It belongs to the universal ribosomal protein uL23 family. Part of the 50S ribosomal subunit.

The protein resides in the plastid. It localises to the chloroplast. Binds to 23S rRNA. The sequence is that of Large ribosomal subunit protein uL23c (rpl23) from Zygnema circumcarinatum (Green alga).